We begin with the raw amino-acid sequence, 400 residues long: Iron(III) enterobactin esterase (400 aa).

It belongs to the Fes family. In terms of assembly, monomer.

The protein localises to the cytoplasm. The catalysed reaction is Fe(III)-enterobactin + 3 H2O + H(+) = Fe(III)-[N-(2,3-dihydroxybenzoyl)-L-serine] + 2 N-(2,3-dihydroxybenzoyl)-L-serine. It catalyses the reaction Fe(III)-enterobactin + H2O = Fe(III)-[N-(2,3-dihydroxybenzoyl)-L-serine]3 + H(+). It carries out the reaction Fe(III)-[N-(2,3-dihydroxybenzoyl)-L-serine]3 + H2O + H(+) = Fe(III)-[N-(2,3-dihydroxybenzoyl)-L-serine]2 + N-(2,3-dihydroxybenzoyl)-L-serine. The enzyme catalyses Fe(III)-[N-(2,3-dihydroxybenzoyl)-L-serine]2 + H2O + H(+) = Fe(III)-[N-(2,3-dihydroxybenzoyl)-L-serine] + N-(2,3-dihydroxybenzoyl)-L-serine. The catalysed reaction is enterobactin + 3 H2O = 3 N-(2,3-dihydroxybenzoyl)-L-serine + 2 H(+). Its activity is regulated as follows. Inhibited by N-ethylmaleimide. Catalyzes the hydrolysis of ferric enterobactin (Fe-Ent). Is responsible for the release of iron from ferric enterobactin. Also catalyzes the hydrolysis of iron-free enterobactin (Ent). Cleavage of ferric enterobactin results in a mixture of three hydrolysis products, 2,3-dihydroxybenzoylserine (DHBS), the linear dimer (DHBS)2 and the linear trimer (DHBS)3, while cleavage of iron-free enterobactin yields only the monomer. Hydrolysis of ferric enterobactin is less efficient than hydrolysis of unliganded enterobactin. It also cleaves the aluminum (III) complex at a rate similar to the ferric complex. The polypeptide is Iron(III) enterobactin esterase (Escherichia coli (strain K12)).